Here is a 359-residue protein sequence, read N- to C-terminus: Peptide chain release factor 1 (359 aa).

Glutamine 233 bears the N5-methylglutamine mark.

The protein belongs to the prokaryotic/mitochondrial release factor family. In terms of processing, methylated by PrmC. Methylation increases the termination efficiency of RF1.

It is found in the cytoplasm. Functionally, peptide chain release factor 1 directs the termination of translation in response to the peptide chain termination codons UAG and UAA. The protein is Peptide chain release factor 1 of Cytophaga hutchinsonii (strain ATCC 33406 / DSM 1761 / CIP 103989 / NBRC 15051 / NCIMB 9469 / D465).